We begin with the raw amino-acid sequence, 67 residues long: Large ribosomal subunit protein bL32 (67 aa).

Over residues 1–19 (MAVPKRKQSRANTHARRSQ) the composition is skewed to basic residues. Residues 1-20 (MAVPKRKQSRANTHARRSQW) are disordered.

The protein belongs to the bacterial ribosomal protein bL32 family.

The sequence is that of Large ribosomal subunit protein bL32 from Leifsonia xyli subsp. xyli (strain CTCB07).